The chain runs to 283 residues: tRNA-cytidine(32) 2-sulfurtransferase (283 aa).

The short motif at 37 to 42 is the PP-loop motif element; the sequence is SGGKDS. [4Fe-4S] cluster is bound by residues Cys112, Cys115, and Cys203.

The protein belongs to the TtcA family. In terms of assembly, homodimer. It depends on Mg(2+) as a cofactor. The cofactor is [4Fe-4S] cluster.

It localises to the cytoplasm. The catalysed reaction is cytidine(32) in tRNA + S-sulfanyl-L-cysteinyl-[cysteine desulfurase] + AH2 + ATP = 2-thiocytidine(32) in tRNA + L-cysteinyl-[cysteine desulfurase] + A + AMP + diphosphate + H(+). Its pathway is tRNA modification. Catalyzes the ATP-dependent 2-thiolation of cytidine in position 32 of tRNA, to form 2-thiocytidine (s(2)C32). The sulfur atoms are provided by the cysteine/cysteine desulfurase (IscS) system. The sequence is that of tRNA-cytidine(32) 2-sulfurtransferase from Legionella pneumophila (strain Corby).